Reading from the N-terminus, the 142-residue chain is Hemoglobin subunit alpha-A (142 aa).

Residues Val-2–Arg-142 enclose the Globin domain. Residue His-59 participates in O2 binding. A heme b-binding site is contributed by His-88.

Belongs to the globin family. In terms of assembly, heterotetramer of two alpha chains and two beta chains. As to expression, red blood cells.

Involved in oxygen transport from the lung to the various peripheral tissues. This is Hemoglobin subunit alpha-A (HBAA) from Gallus gallus (Chicken).